We begin with the raw amino-acid sequence, 81 residues long: Cytotoxin 3b (81 aa).

The signal sequence occupies residues 1–21 (MKTLLLTLVVVTIVCLDLGYT). 4 cysteine pairs are disulfide-bonded: C24/C42, C35/C59, C63/C74, and C75/C80.

The protein belongs to the three-finger toxin family. Short-chain subfamily. Type IA cytotoxin sub-subfamily. Monomer in solution; Homodimer and oligomer in the presence of negatively charged lipids forming a pore with a size ranging between 20 and 30 Angstroms. In terms of tissue distribution, expressed by the venom gland.

The protein localises to the secreted. The protein resides in the target cell membrane. Its function is as follows. Shows cytolytic activity on many different cells by forming pore in lipid membranes. In vivo, increases heart rate or kills the animal by cardiac arrest. In addition, it binds to heparin with high affinity, interacts with Kv channel-interacting protein 1 (KCNIP1) in a calcium-independent manner, and binds to integrin alpha-V/beta-3 (ITGAV/ITGB3) with moderate affinity. The protein is Cytotoxin 3b of Naja atra (Chinese cobra).